The following is a 123-amino-acid chain: Ribosome-binding factor A (123 aa).

This sequence belongs to the RbfA family. As to quaternary structure, monomer. Binds 30S ribosomal subunits, but not 50S ribosomal subunits or 70S ribosomes.

The protein resides in the cytoplasm. Functionally, one of several proteins that assist in the late maturation steps of the functional core of the 30S ribosomal subunit. Associates with free 30S ribosomal subunits (but not with 30S subunits that are part of 70S ribosomes or polysomes). Required for efficient processing of 16S rRNA. May interact with the 5'-terminal helix region of 16S rRNA. This is Ribosome-binding factor A from Variovorax paradoxus (strain S110).